The sequence spans 444 residues: Phosphoglucosamine mutase (444 aa).

Ser103 (phosphoserine intermediate) is an active-site residue. Ser103, Asp242, Asp244, and Asp246 together coordinate Mg(2+). Ser103 carries the phosphoserine modification.

The protein belongs to the phosphohexose mutase family. The cofactor is Mg(2+). Activated by phosphorylation.

The catalysed reaction is alpha-D-glucosamine 1-phosphate = D-glucosamine 6-phosphate. Functionally, catalyzes the conversion of glucosamine-6-phosphate to glucosamine-1-phosphate. This Hydrogenovibrio crunogenus (strain DSM 25203 / XCL-2) (Thiomicrospira crunogena) protein is Phosphoglucosamine mutase.